The chain runs to 997 residues: Protein translocase subunit SecA (997 aa).

ATP-binding positions include glutamine 84, 102 to 106 (GEGKT), and aspartate 582. Residues 950–997 (PYVPVPEAKPEPSEVFGVERKRATPPPQPGLSRAERRRLMRQEKKRKK) are disordered. The segment covering 957–971 (AKPEPSEVFGVERKR) has biased composition (basic and acidic residues). A compositionally biased stretch (basic residues) spans 984 to 997 (ERRRLMRQEKKRKK).

This sequence belongs to the SecA family. In terms of assembly, monomer and homodimer. Part of the essential Sec protein translocation apparatus which comprises SecA, SecYEG and auxiliary proteins SecDF. Other proteins may also be involved.

The protein resides in the cell inner membrane. It localises to the cytoplasm. The catalysed reaction is ATP + H2O + cellular proteinSide 1 = ADP + phosphate + cellular proteinSide 2.. Its function is as follows. Part of the Sec protein translocase complex. Interacts with the SecYEG preprotein conducting channel. Has a central role in coupling the hydrolysis of ATP to the transfer of proteins into and across the cell membrane, serving as an ATP-driven molecular motor driving the stepwise translocation of polypeptide chains across the membrane. In Thermus thermophilus (strain ATCC BAA-163 / DSM 7039 / HB27), this protein is Protein translocase subunit SecA.